Consider the following 89-residue polypeptide: Sodium channel toxin To13 (89 aa).

The signal sequence occupies residues 1 to 18; sequence MKTLFLIITSFILLEVEG. The LCN-type CS-alpha/beta domain occupies 20–87; the sequence is KNGYPRDSKG…TWKNKEPKCK (68 aa). 4 disulfide bridges follow: Cys-30-Cys-86, Cys-34-Cys-60, Cys-45-Cys-67, and Cys-49-Cys-69.

Belongs to the long (4 C-C) scorpion toxin superfamily. Sodium channel inhibitor family. As to expression, expressed by the venom gland.

The protein resides in the secreted. In terms of biological role, inhibits voltage-gated sodium channels (Nav). The chain is Sodium channel toxin To13 from Tityus obscurus (Amazonian scorpion).